Here is a 204-residue protein sequence, read N- to C-terminus: Superoxide dismutase [Mn] (204 aa).

Residues His29, His84, Asp167, and His171 each coordinate Mn(2+).

The protein belongs to the iron/manganese superoxide dismutase family. In terms of assembly, homotetramer. It depends on Mn(2+) as a cofactor.

It carries out the reaction 2 superoxide + 2 H(+) = H2O2 + O2. Destroys superoxide anion radicals which are normally produced within the cells and which are toxic to biological systems. The polypeptide is Superoxide dismutase [Mn] (sodA) (Thermus aquaticus).